The following is a 284-amino-acid chain: METPRLLFVHAHPDDETLTTGATIAHYTARGAEVQVITCTLGEEGEVIGDRWAQLAVDHADQLGGYRIGELTAALAALGVDRPRYLGGAGRWRDSGMEGTPARRRERFVDGDVAEQTAVLAAAIDELRPHVVVTYDPNGGYGHPDHIHTHRLTTAAVEAAAWQVPKFYWTVTSDSALRTGIAALTDVPDGWVTLTADDLPLVGFTDDTIDAALDLGAHSAARVAAMHAHQTQITVAPDGRSFALSNDIALPVDATEYYVLARGEAGERDARGWETDLLAGLNLR.

Zn(2+) contacts are provided by His-12, Asp-15, and His-146.

It belongs to the MshB deacetylase family. Zn(2+) serves as cofactor.

It carries out the reaction 1D-myo-inositol 2-acetamido-2-deoxy-alpha-D-glucopyranoside + H2O = 1D-myo-inositol 2-amino-2-deoxy-alpha-D-glucopyranoside + acetate. Catalyzes the deacetylation of 1D-myo-inositol 2-acetamido-2-deoxy-alpha-D-glucopyranoside (GlcNAc-Ins) in the mycothiol biosynthesis pathway. This is 1D-myo-inositol 2-acetamido-2-deoxy-alpha-D-glucopyranoside deacetylase from Mycolicibacterium gilvum (strain PYR-GCK) (Mycobacterium gilvum (strain PYR-GCK)).